The following is a 144-amino-acid chain: Large ribosomal subunit protein uL15 (144 aa).

The tract at residues 1–53 (MRLNTLSPAEGSKHASKRPGRGIGSGLGKTGGRGHKGQKSRSGGGVRRGFEGG) is disordered. Residues 21–31 (RGIGSGLGKTG) show a composition bias toward gly residues.

This sequence belongs to the universal ribosomal protein uL15 family. Part of the 50S ribosomal subunit.

Functionally, binds to the 23S rRNA. The protein is Large ribosomal subunit protein uL15 of Sodalis glossinidius (strain morsitans).